A 276-amino-acid polypeptide reads, in one-letter code: Undecaprenyl-diphosphatase (276 aa).

The next 6 membrane-spanning stretches (helical) occupy residues 43–63, 85–105, 109–129, 183–203, 214–234, and 249–269; these read RAMA…VWEF, GNLL…ADLI, LFNP…MLWA, AATE…AVYS, ADLP…MIAV, and FAWY…FGWV.

This sequence belongs to the UppP family.

The protein localises to the cell inner membrane. The enzyme catalyses di-trans,octa-cis-undecaprenyl diphosphate + H2O = di-trans,octa-cis-undecaprenyl phosphate + phosphate + H(+). In terms of biological role, catalyzes the dephosphorylation of undecaprenyl diphosphate (UPP). Confers resistance to bacitracin. This is Undecaprenyl-diphosphatase from Pseudomonas putida (strain GB-1).